The primary structure comprises 105 residues: UPF0145 protein Mevan_1624 (105 aa).

The protein belongs to the UPF0145 family.

The polypeptide is UPF0145 protein Mevan_1624 (Methanococcus vannielii (strain ATCC 35089 / DSM 1224 / JCM 13029 / OCM 148 / SB)).